The primary structure comprises 329 residues: Beta-ketoacyl-[acyl-carrier-protein] synthase III (329 aa).

Catalysis depends on residues Cys-114 and His-254. The ACP-binding stretch occupies residues 255–259 (QANLR). Residue Asn-284 is part of the active site.

The protein belongs to the thiolase-like superfamily. FabH family. As to quaternary structure, homodimer.

It is found in the cytoplasm. It carries out the reaction malonyl-[ACP] + acetyl-CoA + H(+) = 3-oxobutanoyl-[ACP] + CO2 + CoA. The protein operates within lipid metabolism; fatty acid biosynthesis. Catalyzes the condensation reaction of fatty acid synthesis by the addition to an acyl acceptor of two carbons from malonyl-ACP. Catalyzes the first condensation reaction which initiates fatty acid synthesis and may therefore play a role in governing the total rate of fatty acid production. Possesses both acetoacetyl-ACP synthase and acetyl transacylase activities. Its substrate specificity determines the biosynthesis of branched-chain and/or straight-chain of fatty acids. This chain is Beta-ketoacyl-[acyl-carrier-protein] synthase III, found in Roseiflexus sp. (strain RS-1).